Here is a 400-residue protein sequence, read N- to C-terminus: Egl nine homolog 1 (400 aa).

At Ala-2 the chain carries N-acetylalanine. The tract at residues 6-20 is required for nuclear export; it reads GGPGVLSASERDRQY. Ser-12 is modified (phosphoserine). The Zn(2+) site is built by Cys-21, Cys-24, Cys-33, Cys-36, Cys-42, His-46, His-54, and Cys-58. An MYND-type; atypical zinc finger spans residues 21–58; sequence CELCGKMENLLRCGRCRSSFYCCKEHQRQDWKKHKLVC. Positions 62-74 are enriched in low complexity; sequence EAPRAQPAPAQPR. Positions 62 to 161 are disordered; the sequence is EAPRAQPAPA…PGGGLRPNGQ (100 aa). Residue Ser-114 is modified to Phosphoserine. Residues 142–157 are compositionally biased toward gly residues; the sequence is AGGGPGEALSPGGGLR. Cys-178 and Cys-185 each carry S-nitrosocysteine. The segment at 218–228 is beta(2)beta(3) 'finger-like' loop; it reads VSQKSDSSKDI. The region spanning 271-369 is the Fe2OG dioxygenase domain; that stretch reads GRTKAMVACY…RYAITVWYFD (99 aa). The residue at position 279 (Cys-279) is an S-nitrosocysteine. Residues His-290 and Asp-292 each contribute to the Fe cation site. S-nitrosocysteine is present on residues Cys-300 and Cys-303. His-351 lines the Fe cation pocket. A 2-oxoglutarate-binding site is contributed by Arg-360.

In terms of assembly, monomer. Interacts with ING4; the interaction inhibits the hydroxylation of HIF alpha proteins. Interacts with PTGES3 (via PXLE motif); thereby recruiting EGLN1 to the HSP90 pathway to facilitate HIF alpha proteins hydroxylation. Interacts with LIMD1. Found in a complex composed of LIMD1, VHL, EGLN1/PHD2, ELOB and CUL2. Interacts with EPAS1. Interacts with CBFA2T3 and HIF1A. Fe(2+) serves as cofactor. L-ascorbate is required as a cofactor. S-nitrosylation inhibits the enzyme activity up to 60% under aerobic conditions. Chelation of Fe(2+) has no effect on the S-nitrosylation. It is uncertain whether nitrosylation occurs on Cys-300 or Cys-303. Expressed in heart, brain liver, skeletal muscle and kidney. Low levels were detected in the lung. Constitutively expressed during differentiation of C2C12 skeletal myocytes.

It localises to the cytoplasm. The protein resides in the nucleus. It carries out the reaction L-prolyl-[hypoxia-inducible factor alpha subunit] + 2-oxoglutarate + O2 = trans-4-hydroxy-L-prolyl-[hypoxia-inducible factor alpha subunit] + succinate + CO2. Cellular oxygen sensor that catalyzes, under normoxic conditions, the post-translational formation of 4-hydroxyproline in hypoxia-inducible factor (HIF) alpha proteins. Hydroxylates a specific proline found in each of the oxygen-dependent degradation (ODD) domains (N-terminal, NODD, and C-terminal, CODD) of HIF1A. Also hydroxylates HIF2A. Has a preference for the CODD site for both HIF1A and HIF1B. Hydroxylated HIFs are then targeted for proteasomal degradation via the von Hippel-Lindau ubiquitination complex. Under hypoxic conditions, the hydroxylation reaction is attenuated allowing HIFs to escape degradation resulting in their translocation to the nucleus, heterodimerization with HIF1B, and increased expression of hypoxy-inducible genes. EGLN1 is the most important isozyme under normoxia and, through regulating the stability of HIF1, involved in various hypoxia-influenced processes such as angiogenesis in retinal and cardiac functionality. Target proteins are preferentially recognized via a LXXLAP motif. The polypeptide is Egl nine homolog 1 (Egln1) (Mus musculus (Mouse)).